The chain runs to 355 residues: Erythronate-4-phosphate dehydrogenase (355 aa).

Substrate-binding residues include Ser-45 and Thr-66. NAD(+) is bound at residue Asp-146. Residue Arg-206 is part of the active site. Residue Asp-229 participates in NAD(+) binding. Glu-234 is an active-site residue. The active-site Proton donor is the His-251. Gly-254 is a binding site for NAD(+). Residue Tyr-255 participates in substrate binding.

Belongs to the D-isomer specific 2-hydroxyacid dehydrogenase family. PdxB subfamily. In terms of assembly, homodimer.

The protein resides in the cytoplasm. The enzyme catalyses 4-phospho-D-erythronate + NAD(+) = (R)-3-hydroxy-2-oxo-4-phosphooxybutanoate + NADH + H(+). It functions in the pathway cofactor biosynthesis; pyridoxine 5'-phosphate biosynthesis; pyridoxine 5'-phosphate from D-erythrose 4-phosphate: step 2/5. Catalyzes the oxidation of erythronate-4-phosphate to 3-hydroxy-2-oxo-4-phosphonooxybutanoate. This Acinetobacter baumannii (strain ACICU) protein is Erythronate-4-phosphate dehydrogenase.